The sequence spans 83 residues: Putative defensin-like protein 111 (83 aa).

The N-terminal stretch at 1–24 (MAITKKILLPFVLTILFVISSVHC) is a signal peptide. Intrachain disulfides connect Cys-40–Cys-80, Cys-46–Cys-69, Cys-54–Cys-78, and Cys-58–Cys-79.

It belongs to the DEFL family.

The protein resides in the secreted. The protein is Putative defensin-like protein 111 (LCR50) of Arabidopsis thaliana (Mouse-ear cress).